A 379-amino-acid polypeptide reads, in one-letter code: MASLASPPLPCRAAATASRSGRPAPRLLGPPPPPASPLLSSASARFPRAPCNAARWSRRDAVRVCSQAGAAGPAPLSKTLSDLKDSCWRFLRPHTIRGTALGSIALVARALIENPQLINWWLVFKAFYGLVALICGNGYIVGINQIYDIRIDKVNKPYLPIAAGDLSVQTAWLLVVLFAAAGFSIVVTNFGPFITSLYCLGLFLGTIYSVPPFRLKRYPVAAFLIIATVRGFLLNFGVYYATRAALGLTFQWSSPVAFITCFVTLFALVIAITKDLPDVEGDRKYQISTLATKLGVRNIAFLGSGLLIANYVAAIAVAFLMPQAFRRTVMVPVHAALAVGIIFQTWVLEQAKYTKDAISQYYRFIWNLFYAEYIFFPLI.

The disordered stretch occupies residues 1 to 39; sequence MASLASPPLPCRAAATASRSGRPAPRLLGPPPPPASPLL. Residues 1–65 constitute a chloroplast transit peptide; it reads MASLASPPLP…WSRRDAVRVC (65 aa). 8 consecutive transmembrane segments (helical) span residues 121-141, 174-194, 195-215, 220-240, 252-272, 299-319, 328-348, and 361-378; these read WLVF…GYIV, LVVL…GPFI, TSLY…PFRL, VAAF…GVYY, WSSP…VIAI, IAFL…AVAF, TVMV…TWVL, and YYRF…FFPL.

It belongs to the UbiA prenyltransferase family.

The protein resides in the plastid. It localises to the chloroplast thylakoid membrane. The catalysed reaction is phytyl diphosphate + homogentisate + H(+) = 2-methyl-6-phytyl-1,4-benzene-1,4-diol + CO2 + diphosphate. It functions in the pathway cofactor biosynthesis; tocopherol biosynthesis. Its function is as follows. Involved in the synthesis of tocopherol (vitamin E). Catalyzes the condensation of homogentisate and phytyl diphosphate to form dimethylphytylhydrquinone. This is Probable homogentisate phytyltransferase 2, chloroplastic (HPT2) from Oryza sativa subsp. japonica (Rice).